The following is a 235-amino-acid chain: Octanoyltransferase (235 aa).

In terms of domain architecture, BPL/LPL catalytic spans 37–220; that stretch reads AGGPDTLLLL…AVNDALDGWL (184 aa). Residues 78-85, 150-152, and 163-165 each bind substrate; these read RGGKITWH, AIG, and GFA. The Acyl-thioester intermediate role is filled by cysteine 181.

Belongs to the LipB family.

It is found in the cytoplasm. It catalyses the reaction octanoyl-[ACP] + L-lysyl-[protein] = N(6)-octanoyl-L-lysyl-[protein] + holo-[ACP] + H(+). The protein operates within protein modification; protein lipoylation via endogenous pathway; protein N(6)-(lipoyl)lysine from octanoyl-[acyl-carrier-protein]: step 1/2. Functionally, catalyzes the transfer of endogenously produced octanoic acid from octanoyl-acyl-carrier-protein onto the lipoyl domains of lipoate-dependent enzymes. Lipoyl-ACP can also act as a substrate although octanoyl-ACP is likely to be the physiological substrate. The polypeptide is Octanoyltransferase (Mycobacterium leprae (strain Br4923)).